Here is a 106-residue protein sequence, read N- to C-terminus: Large ribosomal subunit protein eL42 (106 aa).

The disordered stretch occupies residues 26–53; it reads YKKGKDSLYAQGKRRYDRKQSGYGGQTK.

Belongs to the eukaryotic ribosomal protein eL42 family. In terms of assembly, component of the large ribosomal subunit.

The protein resides in the cytoplasm. Component of the large ribosomal subunit. The ribosome is a large ribonucleoprotein complex responsible for the synthesis of proteins in the cell. This is Large ribosomal subunit protein eL42 (rpl36a) from Danio rerio (Zebrafish).